The primary structure comprises 215 residues: Redox-sensing transcriptional repressor Rex (215 aa).

A DNA-binding region (H-T-H motif) is located at residues 18-57; the sequence is LYHRYLKYLDESGKERVSSAELSEAVKVDSATIRRDFSYF. 92–97 provides a ligand contact to NAD(+); sequence GVGNLG.

This sequence belongs to the transcriptional regulatory Rex family. Homodimer.

Its subcellular location is the cytoplasm. Functionally, modulates transcription in response to changes in cellular NADH/NAD(+) redox state. This is Redox-sensing transcriptional repressor Rex from Listeria innocua serovar 6a (strain ATCC BAA-680 / CLIP 11262).